We begin with the raw amino-acid sequence, 488 residues long: N-succinylglutamate 5-semialdehyde dehydrogenase (488 aa).

An NAD(+)-binding site is contributed by 221-226 (GSSRTG). Catalysis depends on residues Glu-244 and Cys-278.

Belongs to the aldehyde dehydrogenase family. AstD subfamily.

The enzyme catalyses N-succinyl-L-glutamate 5-semialdehyde + NAD(+) + H2O = N-succinyl-L-glutamate + NADH + 2 H(+). The protein operates within amino-acid degradation; L-arginine degradation via AST pathway; L-glutamate and succinate from L-arginine: step 4/5. Functionally, catalyzes the NAD-dependent reduction of succinylglutamate semialdehyde into succinylglutamate. The chain is N-succinylglutamate 5-semialdehyde dehydrogenase from Pseudomonas fluorescens (strain ATCC BAA-477 / NRRL B-23932 / Pf-5).